Consider the following 465-residue polypeptide: Trigger factor (465 aa).

The PPIase FKBP-type domain maps to 163–248 (GDVINFNFKG…INKIKENQPA (86 aa)). The tract at residues 431 to 465 (EIVNKNQNDNEIEQDKEQKDNNEEKIKQENNLENK) is disordered. Positions 443 to 465 (EQDKEQKDNNEEKIKQENNLENK) are enriched in basic and acidic residues.

The protein belongs to the FKBP-type PPIase family. Tig subfamily.

It localises to the cytoplasm. It catalyses the reaction [protein]-peptidylproline (omega=180) = [protein]-peptidylproline (omega=0). Involved in protein export. Acts as a chaperone by maintaining the newly synthesized protein in an open conformation. Functions as a peptidyl-prolyl cis-trans isomerase. The protein is Trigger factor of Mesomycoplasma hyopneumoniae (strain J / ATCC 25934 / NCTC 10110) (Mycoplasma hyopneumoniae).